A 131-amino-acid chain; its full sequence is MLTAMLLSCVLLLALPPTLGVQMGVAPLKGIRRPDQALFPEFPGLSLNGLKKTTADRAEEVLLQKAEALAEVLDPQNRESRSPRRCVRLHESCLGQQVPCCDPCATCYCRFFNAFCYCRKLGTATNLCSRT.

A signal peptide spans 1-20 (MLTAMLLSCVLLLALPPTLG). The propeptide occupies 21-81 (VQMGVAPLKG…VLDPQNRESR (61 aa)). Disulfide bonds link C86–C101, C93–C107, C100–C118, C104–C128, and C109–C116. In terms of domain architecture, Agouti spans 86–128 (CVRLHESCLGQQVPCCDPCATCYCRFFNAFCYCRKLGTATNLC). The segment at 110 to 112 (RFF) is interaction with melanocortin receptors.

As to quaternary structure, interacts with melanocortin receptors MC3R, MC4R and MC5R. Expressed in arcuate nucleus and median eminence, adrenal gland (medulla), hypothalamus, testis, and lung.

Its subcellular location is the secreted. The protein localises to the golgi apparatus lumen. Its function is as follows. Plays a role in weight homeostasis. Involved in the control of feeding behavior through the central melanocortin system. Acts as alpha melanocyte-stimulating hormone antagonist by inhibiting cAMP production mediated by stimulation of melanocortin receptors within the hypothalamus and adrenal gland. Has very low activity with MC5R. Is an inverse agonist for MC3R and MC4R being able to suppress their constitutive activity. It promotes MC3R and MC4R endocytosis in an arrestin-dependent manner. This is Agouti-related protein (Agrp) from Mus musculus (Mouse).